The sequence spans 256 residues: Alcohol dehydrogenase (256 aa).

12–35 provides a ligand contact to NAD(+); the sequence is FVAGLGGIGLDTSKELVKRDLKNL. Ser140 provides a ligand contact to substrate. The Proton acceptor role is filled by Tyr153.

This sequence belongs to the short-chain dehydrogenases/reductases (SDR) family. In terms of assembly, homodimer.

It carries out the reaction a primary alcohol + NAD(+) = an aldehyde + NADH + H(+). It catalyses the reaction a secondary alcohol + NAD(+) = a ketone + NADH + H(+). This chain is Alcohol dehydrogenase (Adh), found in Drosophila orena (Fruit fly).